A 993-amino-acid polypeptide reads, in one-letter code: Isoleucine--tRNA ligase, mitochondrial (993 aa).

A mitochondrion-targeting transit peptide spans 1–29 (SLWGTPRLPCSPGWQGATKRLLVRSVSGA). K55 carries the post-translational modification N6-acetyllysine; alternate. The residue at position 55 (K55) is an N6-succinyllysine; alternate. Positions 97–107 (PYANGDPHVGH) match the 'HIGH' region motif. Position 170 is an N6-acetyllysine (K170). Position 175 is an N6-succinyllysine (K175). Position 214 is an N6-acetyllysine (K214). An N6-acetyllysine; alternate modification is found at K222. At K222 the chain carries N6-succinyllysine; alternate. Residues K460 and K481 each carry the N6-succinyllysine modification. The ATP site is built by K645 and K648. The 'KMSKS' region signature appears at 645–649 (KMSKS). K706 is modified (N6-acetyllysine). N6-acetyllysine; alternate is present on residues K756 and K762. K756 and K762 each carry N6-succinyllysine; alternate.

The protein belongs to the class-I aminoacyl-tRNA synthetase family.

It is found in the mitochondrion matrix. The catalysed reaction is tRNA(Ile) + L-isoleucine + ATP = L-isoleucyl-tRNA(Ile) + AMP + diphosphate. Its function is as follows. Aminoacyl-tRNA synthetase that catalyzes the specific attachment of isoleucine to its cognate tRNA (tRNA(Ile)). The polypeptide is Isoleucine--tRNA ligase, mitochondrial (IARS2) (Macaca fascicularis (Crab-eating macaque)).